Consider the following 213-residue polypeptide: LexA repressor (213 aa).

The segment at residues 27–47 (QTEIARAFGFKGIRAAQYHLE) is a DNA-binding region (H-T-H motif). Catalysis depends on for autocatalytic cleavage activity residues Ser133 and Lys170.

It belongs to the peptidase S24 family. As to quaternary structure, homodimer.

It carries out the reaction Hydrolysis of Ala-|-Gly bond in repressor LexA.. Its function is as follows. Represses a number of genes involved in the response to DNA damage (SOS response), including recA and lexA. Has been shown to bind to the palindromic sequence 5'-CTG-N(8-12)-C-[TC]-G. In the presence of single-stranded DNA, RecA interacts with LexA causing an autocatalytic cleavage which disrupts the DNA-binding part of LexA, leading to derepression of the SOS regulon and eventually DNA repair. The sequence is that of LexA repressor from Xanthomonas citri (Xanthomonas campestris pv. citri).